The primary structure comprises 111 residues: Antirepressor protein CarS (111 aa).

In terms of assembly, monomer. Interacts with CarA and CarH.

In terms of biological role, involved in carotenoid biosynthesis. Antagonizes the transcriptional repressor proteins CarA and CarH by preventing their binding to DNA. Can also dissociate preformed CarA-DNA complexes. Does not bind DNA. The chain is Antirepressor protein CarS (carS) from Myxococcus xanthus.